A 402-amino-acid chain; its full sequence is Thyroid hormone receptor alpha (402 aa).

Residues 1–22 (MEQKPSTLDPLSEPEDTRWLDG) are disordered. Positions 1–50 (MEQKPSTLDPLSEPEDTRWLDGKRKRKSSQCLVKSSMSGYIPSYLDKDEQ) are modulating. Ser-12 bears the Phosphoserine; by CK2 mark. The residue at position 28 (Ser-28) is a Phosphoserine. Zn(2+) contacts are provided by Cys-51, Cys-54, Cys-68, Cys-71, Cys-89, Cys-95, Cys-105, and Cys-108. 2 consecutive NR C4-type zinc fingers follow at residues 51 to 71 (CVVC…CEGC) and 89 to 113 (CKYD…FKKC). A DNA-binding region (nuclear receptor) is located at residues 51 to 125 (CVVCGDKATG…VGMAMDLVLD (75 aa)). The 242-residue stretch at 161–402 (EEWELIHVVT…ELFPPLFLEV (242 aa)) folds into the NR LBD domain. Residues Arg-226 and Ser-275 each contribute to the 3,3',5-triiodo-L-thyronine site.

Belongs to the nuclear hormone receptor family. NR1 subfamily. Probably interacts with SFPQ.

It is found in the nucleus. In terms of biological role, nuclear hormone receptor that can act as a repressor or activator of transcription. High affinity receptor for thyroid hormones, including triiodothyronine and thyroxine. This chain is Thyroid hormone receptor alpha (THRA), found in Aptenodytes patagonicus (King penguin).